A 176-amino-acid polypeptide reads, in one-letter code: Pituitary adenylate cyclase-activating polypeptide (176 aa).

The signal sequence occupies residues 1 to 24 (MTMCSGARLALLVYGIIMHSSVYC). The propeptide occupies 25 to 80 (SPAAAGLRFPGIRPEDEAYDEDGNPLQDFYDSDPPGVGGPASTLRDAYALYYPAEE). The important for receptor binding stretch occupies residues 150–158 (VKKYLAAVL). L158 carries the post-translational modification Leucine amide. K169 carries the post-translational modification Lysine amide. Residues 173–176 (IAYL) constitute a propeptide that is removed on maturation.

Belongs to the glucagon family.

Its subcellular location is the secreted. In terms of biological role, PACAP is a neuropeptide involved in diverse array of physiological processes through activating the PACAP subfamily of class B1 G protein-coupled receptors: VIP receptor 1 (VIPR1), VIP receptor 2 (VIPR2), and PACAP type I receptor (ADCYAP1R1). Exerts neuroprotective and general cytoprotective effects due to anti-apoptotic, anti-inflammatory, and antioxidant actions. Promotes neuron projection development through the RAPGEF2/Rap1/B-Raf/ERK pathway. In chromaffin cells, induces long-lasting increase of intracellular calcium concentrations and neuroendocrine secretion. Involved in the control of glucose homeostasis, induces insulin secretion by pancreatic beta cells. PACAP exists in two bioactive forms from proteolysis of the same precursor protein, PACAP27 and PACAP38, which differ by eleven amino acid residues in the C-terminus. In Sus scrofa (Pig), this protein is Pituitary adenylate cyclase-activating polypeptide (ADCYAP1).